The sequence spans 396 residues: Mannonate dehydratase (396 aa).

This sequence belongs to the mannonate dehydratase family. It depends on Fe(2+) as a cofactor. Requires Mn(2+) as cofactor.

It catalyses the reaction D-mannonate = 2-dehydro-3-deoxy-D-gluconate + H2O. It functions in the pathway carbohydrate metabolism; pentose and glucuronate interconversion. Its function is as follows. Catalyzes the dehydration of D-mannonate. This chain is Mannonate dehydratase, found in Yersinia enterocolitica serotype O:8 / biotype 1B (strain NCTC 13174 / 8081).